Here is a 442-residue protein sequence, read N- to C-terminus: 3-dehydroquinate synthase, chloroplastic (442 aa).

A chloroplast-targeting transit peptide spans 1-58 (MAANTISLSNVAASKNLNSFQSRAFIAPPTIFFPVASAKSKPGELSLSSTTLSRSRVR). Ala-59 carries the post-translational modification N-acetylalanine. NAD(+) is bound by residues Asn-119, 150–152 (DGE), Lys-155, 183–188 (GGVIGD), 208–209 (TT), Lys-221, Lys-230, and 248–251 (TLNT). Glu-263 is an a divalent metal cation binding site. Lys-305 serves as a coordination point for NAD(+). Residues His-326 and His-343 each coordinate a divalent metal cation.

The protein belongs to the sugar phosphate cyclases superfamily. Dehydroquinate synthase family. In terms of assembly, homodimer. A divalent metal cation serves as cofactor. NAD(+) is required as a cofactor.

Its subcellular location is the plastid. The protein localises to the chloroplast. It carries out the reaction 7-phospho-2-dehydro-3-deoxy-D-arabino-heptonate = 3-dehydroquinate + phosphate. It participates in metabolic intermediate biosynthesis; chorismate biosynthesis; chorismate from D-erythrose 4-phosphate and phosphoenolpyruvate: step 2/7. Its function is as follows. Catalyzes the second step in the shikimate pathway. In Arabidopsis thaliana (Mouse-ear cress), this protein is 3-dehydroquinate synthase, chloroplastic (DHQS).